The chain runs to 563 residues: Arginine--tRNA ligase (563 aa).

The 'HIGH' region signature appears at 108–118 (PNVAKEMHVGH).

It belongs to the class-I aminoacyl-tRNA synthetase family. In terms of assembly, monomer.

Its subcellular location is the cytoplasm. It catalyses the reaction tRNA(Arg) + L-arginine + ATP = L-arginyl-tRNA(Arg) + AMP + diphosphate. The chain is Arginine--tRNA ligase (argS) from Pasteurella multocida (strain Pm70).